Here is a 322-residue protein sequence, read N- to C-terminus: Tyrosine recombinase XerC (322 aa).

The Core-binding (CB) domain occupies 14–104; it reads PDLREAAAAW…ALRSFARHLD (91 aa). The Tyr recombinase domain occupies 125 to 311; sequence RLPRPLPVAA…DSARLLSAFD (187 aa). Residues arginine 170, lysine 195, histidine 263, arginine 266, and histidine 289 contribute to the active site. The O-(3'-phospho-DNA)-tyrosine intermediate role is filled by tyrosine 298.

The protein belongs to the 'phage' integrase family. XerC subfamily. As to quaternary structure, forms a cyclic heterotetrameric complex composed of two molecules of XerC and two molecules of XerD.

It is found in the cytoplasm. Its function is as follows. Site-specific tyrosine recombinase, which acts by catalyzing the cutting and rejoining of the recombining DNA molecules. The XerC-XerD complex is essential to convert dimers of the bacterial chromosome into monomers to permit their segregation at cell division. It also contributes to the segregational stability of plasmids. The protein is Tyrosine recombinase XerC of Methylobacterium nodulans (strain LMG 21967 / CNCM I-2342 / ORS 2060).